A 267-amino-acid polypeptide reads, in one-letter code: 4-hydroxy-tetrahydrodipicolinate reductase (267 aa).

NAD(+) contacts are provided by residues 9–14 (GAAGRM) and aspartate 35. Arginine 36 serves as a coordination point for NADP(+). Residues 99–101 (GTT) and 123–126 (APNY) contribute to the NAD(+) site. Residue histidine 156 is the Proton donor/acceptor of the active site. Histidine 157 is a (S)-2,3,4,5-tetrahydrodipicolinate binding site. Lysine 160 (proton donor) is an active-site residue. 166-167 (GT) contacts (S)-2,3,4,5-tetrahydrodipicolinate.

It belongs to the DapB family.

The protein localises to the cytoplasm. The catalysed reaction is (S)-2,3,4,5-tetrahydrodipicolinate + NAD(+) + H2O = (2S,4S)-4-hydroxy-2,3,4,5-tetrahydrodipicolinate + NADH + H(+). It catalyses the reaction (S)-2,3,4,5-tetrahydrodipicolinate + NADP(+) + H2O = (2S,4S)-4-hydroxy-2,3,4,5-tetrahydrodipicolinate + NADPH + H(+). The protein operates within amino-acid biosynthesis; L-lysine biosynthesis via DAP pathway; (S)-tetrahydrodipicolinate from L-aspartate: step 4/4. In terms of biological role, catalyzes the conversion of 4-hydroxy-tetrahydrodipicolinate (HTPA) to tetrahydrodipicolinate. The protein is 4-hydroxy-tetrahydrodipicolinate reductase of Alkalilimnicola ehrlichii (strain ATCC BAA-1101 / DSM 17681 / MLHE-1).